The primary structure comprises 216 residues: Protein shisa-5 (216 aa).

The signal sequence occupies residues 1–26 (MAAPAPAPRILVLLLLLLPAPEGAQS). Residues 27–93 (ELCMISHGRK…SGFDSDPVAR (67 aa)) are Extracellular-facing. A helical membrane pass occupies residues 94 to 114 (FGTVIAIGVTLFVIAVVTVIV). The Cytoplasmic segment spans residues 115 to 216 (CCTCSCCCLY…AYMEPPKAVP (102 aa)).

Belongs to the shisa family. In terms of assembly, interacts with PDCD6; PDCD6 can stabilize SHISA5.

Its subcellular location is the endoplasmic reticulum membrane. The protein localises to the nucleus membrane. Its function is as follows. Can induce apoptosis in a caspase-dependent manner and plays a role in p53/TP53-dependent apoptosis. This Bos taurus (Bovine) protein is Protein shisa-5 (SHISA5).